The following is a 545-amino-acid chain: 2-oxo-Delta(3)-4,5,5-trimethylcyclopentenylacetyl-CoA monooxygenase (545 aa).

FAD is bound by residues threonine 20, glutamate 39, 47–50 (TWYW), 59–60 (DT), tyrosine 65, and valine 112. 57-59 (RLD) lines the NADP(+) pocket. NADP(+)-binding positions include 193–199 (TGATGVQ) and 216–217 (RT). FAD is bound at residue valine 446. Tryptophan 501 provides a ligand contact to NADP(+).

It belongs to the FAD-binding monooxygenase family. Homodimer. The cofactor is FAD.

It catalyses the reaction [(1R)-2,2,3-trimethyl-5-oxocyclopent-3-enyl]acetyl-CoA + NADPH + O2 + H(+) = [(2R)-3,3,4-trimethyl-6-oxo-3,6-dihydro-1H-pyran-2-yl]acetyl-CoA + NADP(+) + H2O. Its pathway is terpene metabolism; (R)-camphor degradation. In terms of biological role, involved in the degradation of (+)-camphor. Catalyzes the lactonization of 2-oxo-delta(3)-4,5, 5-trimethylcyclopentenylacetyl-CoA (OT-CoA), a key intermediate in the metabolism of camphor. 2-Oxocyclopentyl ethyl acetate is also a good substrate, as is 2-oxocyclohexyl ethyl acetate and methyl-substituted cyclohexanones, but free acid is a poor substrate. The sequence is that of 2-oxo-Delta(3)-4,5,5-trimethylcyclopentenylacetyl-CoA monooxygenase (otemo) from Pseudomonas putida (Arthrobacter siderocapsulatus).